The chain runs to 227 residues: Agamous-like MADS-box protein AGL8 homolog (227 aa).

The MADS-box domain maps to 3–57 (RGRVQLKRIENKINRQVTFSKRRSGLLKKAHEISVLCDAEVGLIVFSTKGKLFEY). Positions 88–178 (PVSWTLEHRK…SKKVKEREKS (91 aa)) constitute a K-box domain.

In terms of tissue distribution, flower specific.

The protein resides in the nucleus. Functionally, probable transcription factor. The chain is Agamous-like MADS-box protein AGL8 homolog (TDR4) from Solanum lycopersicum (Tomato).